The primary structure comprises 150 residues: Flagellar assembly factor FliW (150 aa).

The protein belongs to the FliW family. Interacts with translational regulator CsrA. Interacts with flagellins FlaB1, FlaB2 and FlaB3.

The protein resides in the cytoplasm. In terms of biological role, acts as an anti-CsrA protein, binds CsrA and prevents it from repressing translation of its target genes, one of which is flagellin. Binds to flagellin and participates in the assembly of the flagellum. Its function is as follows. Binds to the C-terminal region of flagellin, which is implicated in polymerization, and participates in the assembly of the flagellum. This Treponema pallidum (strain Nichols) protein is Flagellar assembly factor FliW.